Consider the following 387-residue polypeptide: 3-hydroxyisobutyryl-CoA hydrolase-like protein 5 (387 aa).

Ala-2 carries the N-acetylalanine modification.

It belongs to the enoyl-CoA hydratase/isomerase family.

In Arabidopsis thaliana (Mouse-ear cress), this protein is 3-hydroxyisobutyryl-CoA hydrolase-like protein 5.